The chain runs to 82 residues: Putative membrane protein insertion efficiency factor (82 aa).

Residues 63 to 82 form a disordered region; that stretch reads GGFDPVPLKKDKNSKTTHHH.

This sequence belongs to the UPF0161 family.

It is found in the cell membrane. Could be involved in insertion of integral membrane proteins into the membrane. The protein is Putative membrane protein insertion efficiency factor of Staphylococcus epidermidis (strain ATCC 35984 / DSM 28319 / BCRC 17069 / CCUG 31568 / BM 3577 / RP62A).